Reading from the N-terminus, the 392-residue chain is Leucine aminopeptidase 1 (392 aa).

The N-terminal stretch at 1 to 18 (MKFSQASLLAACLPAISA) is a signal peptide. A propeptide spanning residues 19–82 (RFIETAEADN…LGSTRLNAQT (64 aa)) is cleaved from the precursor. The N-linked (GlcNAc...) asparagine glycan is linked to Asn-174. Zn(2+) contacts are provided by His-182, Asp-201, Glu-240, and Asp-267. Cys-316 and Cys-320 form a disulfide bridge. His-349 contributes to the Zn(2+) binding site.

It belongs to the peptidase M28 family. M28E subfamily. In terms of assembly, monomer. Requires Zn(2+) as cofactor.

It localises to the secreted. In terms of biological role, extracellular aminopeptidase that allows assimilation of proteinaceous substrates. This Fusarium vanettenii (strain ATCC MYA-4622 / CBS 123669 / FGSC 9596 / NRRL 45880 / 77-13-4) (Fusarium solani subsp. pisi) protein is Leucine aminopeptidase 1 (LAP1).